Consider the following 241-residue polypeptide: UDP-2,3-diacylglucosamine hydrolase (241 aa).

5 residues coordinate Mn(2+): Asp9, His11, Asp42, Asn79, and His114. 79–80 is a substrate binding site; that stretch reads NR. Substrate is bound by residues Asp122, Ser160, Asn164, Lys167, and His195. 2 residues coordinate Mn(2+): His195 and His197.

Belongs to the LpxH family. Requires Mn(2+) as cofactor.

It is found in the cell inner membrane. The enzyme catalyses UDP-2-N,3-O-bis[(3R)-3-hydroxytetradecanoyl]-alpha-D-glucosamine + H2O = 2-N,3-O-bis[(3R)-3-hydroxytetradecanoyl]-alpha-D-glucosaminyl 1-phosphate + UMP + 2 H(+). The protein operates within glycolipid biosynthesis; lipid IV(A) biosynthesis; lipid IV(A) from (3R)-3-hydroxytetradecanoyl-[acyl-carrier-protein] and UDP-N-acetyl-alpha-D-glucosamine: step 4/6. In terms of biological role, hydrolyzes the pyrophosphate bond of UDP-2,3-diacylglucosamine to yield 2,3-diacylglucosamine 1-phosphate (lipid X) and UMP by catalyzing the attack of water at the alpha-P atom. Involved in the biosynthesis of lipid A, a phosphorylated glycolipid that anchors the lipopolysaccharide to the outer membrane of the cell. The polypeptide is UDP-2,3-diacylglucosamine hydrolase (Shewanella frigidimarina (strain NCIMB 400)).